Here is a 382-residue protein sequence, read N- to C-terminus: Inactive serine protease 54 (382 aa).

The first 20 residues, 1–20 (MAELRGILLLLLYMSHSSSA), serve as a signal peptide directing secretion. Residues 29–258 (IVDQLHENLV…YSNWIIAKTR (230 aa)) enclose the Peptidase S1 domain. Asn-113 carries N-linked (GlcNAc...) asparagine glycosylation. 3 disulfide bridges follow: Cys-154-Cys-216, Cys-185-Cys-195, and Cys-206-Cys-237.

This sequence belongs to the peptidase S1 family. Plasma kallikrein subfamily.

The protein resides in the secreted. The polypeptide is Inactive serine protease 54 (Prss54) (Rattus norvegicus (Rat)).